The following is a 32-amino-acid chain: Snaclec (32 aa).

Dimer; disulfide-linked. In terms of tissue distribution, expressed by the venom gland.

It localises to the secreted. Its function is as follows. Interferes with one step of hemostasis (modulation of platelet aggregation, or coagulation cascade, for example). In Bothrops diporus (Chaco lancehead), this protein is Snaclec.